The primary structure comprises 372 residues: MDAALLLNVEGVKKTILHGGTGELPNFITGSRVIFHFRTMKCDEERTVIDDSREVGQPMHIIIGNMFKLEVWEILLTSMRVREVAEFWCDTIHTGVYPILSRSLRQMAQGKDPTEWHVHTCGLANMFAYHTLGYEDLDELQKEPQPLIFVIELLQVDAPSDYQRETWNLSNHEKMKVVPVLHGEGNRLFKLGRYEEASSKYQEAIICLRNLQTKEKPWEVQWLKLEKMINTLILNYCQCLLKKEEYYEVLEHTSDILRHHPGIVKAYYVRARAHAEVWNEAEAKADLQKVLELEPSMQKAVRRELRLLENRMAEKQEEERLRCRNMLSQGATWSPAEPPAEPPAESSTEPPAEPPAEPPAELTLTPGHPLQH.

The PPIase FKBP-type domain maps to 53-145 (REVGQPMHII…DLDELQKEPQ (93 aa)). 3 TPR repeats span residues 178–211 (VPVL…LRNL), 230–263 (NTLI…HPGI), and 264–297 (VKAY…EPSM). The tract at residues 325–372 (NMLSQGATWSPAEPPAEPPAESSTEPPAEPPAEPPAELTLTPGHPLQH) is disordered.

As to quaternary structure, interacts with NUB1.

The protein localises to the cytoplasm. It localises to the nucleus. May be important in protein trafficking and/or protein folding and stabilization. The sequence is that of Aryl-hydrocarbon-interacting protein-like 1 (AIPL1) from Saimiri boliviensis boliviensis (Bolivian squirrel monkey).